Here is a 322-residue protein sequence, read N- to C-terminus: Serine/threonine-protein phosphatase PP1-2 (322 aa).

Mn(2+) is bound by residues Asp-60, His-62, Asp-88, and Asn-120. The active-site Proton donor is His-121. 2 residues coordinate Mn(2+): His-169 and His-244. Positions 298-322 are disordered; it reads RQRVSQSSIKESKSATNSLKKSKNN. Positions 301-316 are enriched in polar residues; sequence VSQSSIKESKSATNSL.

The protein belongs to the PPP phosphatase family. PP-1 subfamily. Mn(2+) serves as cofactor.

The enzyme catalyses O-phospho-L-seryl-[protein] + H2O = L-seryl-[protein] + phosphate. It catalyses the reaction O-phospho-L-threonyl-[protein] + H2O = L-threonyl-[protein] + phosphate. In terms of biological role, essential role in cell cycle control. PP1 is perhaps required for exit from mitosis. This chain is Serine/threonine-protein phosphatase PP1-2 (sds21), found in Schizosaccharomyces pombe (strain 972 / ATCC 24843) (Fission yeast).